A 162-amino-acid chain; its full sequence is Protein NrdI (162 aa).

Belongs to the NrdI family.

Functionally, probably involved in ribonucleotide reductase function. The sequence is that of Protein NrdI from Streptococcus pyogenes serotype M1.